A 417-amino-acid chain; its full sequence is Histidine--tRNA ligase (417 aa).

This sequence belongs to the class-II aminoacyl-tRNA synthetase family.

It localises to the cytoplasm. It carries out the reaction tRNA(His) + L-histidine + ATP = L-histidyl-tRNA(His) + AMP + diphosphate + H(+). The protein is Histidine--tRNA ligase of Pyrobaculum neutrophilum (strain DSM 2338 / JCM 9278 / NBRC 100436 / V24Sta) (Thermoproteus neutrophilus).